The sequence spans 303 residues: Bifunctional protein FolD (303 aa).

Residues 168–170 (GRS), threonine 197, and valine 238 contribute to the NADP(+) site.

It belongs to the tetrahydrofolate dehydrogenase/cyclohydrolase family. Homodimer.

It catalyses the reaction (6R)-5,10-methylene-5,6,7,8-tetrahydrofolate + NADP(+) = (6R)-5,10-methenyltetrahydrofolate + NADPH. It carries out the reaction (6R)-5,10-methenyltetrahydrofolate + H2O = (6R)-10-formyltetrahydrofolate + H(+). Its pathway is one-carbon metabolism; tetrahydrofolate interconversion. In terms of biological role, catalyzes the oxidation of 5,10-methylenetetrahydrofolate to 5,10-methenyltetrahydrofolate and then the hydrolysis of 5,10-methenyltetrahydrofolate to 10-formyltetrahydrofolate. This is Bifunctional protein FolD from Desulfosudis oleivorans (strain DSM 6200 / JCM 39069 / Hxd3) (Desulfococcus oleovorans).